The sequence spans 62 residues: MQWLADYWWIILILLVGVLLNAIKELRRLDVKKFLDNKPELPPHRDLNSKWDDEDDWPQKKP.

Residues 3–23 traverse the membrane as a helical segment; that stretch reads WLADYWWIILILLVGVLLNAI. The tract at residues 36–62 is disordered; it reads DNKPELPPHRDLNSKWDDEDDWPQKKP.

The protein belongs to the UPF0370 family.

Its subcellular location is the cell membrane. The chain is UPF0370 protein plu2724 from Photorhabdus laumondii subsp. laumondii (strain DSM 15139 / CIP 105565 / TT01) (Photorhabdus luminescens subsp. laumondii).